Reading from the N-terminus, the 478-residue chain is Chromosomal replication initiator protein DnaA (478 aa).

Residues Met1 to Gln90 form a domain I, interacts with DnaA modulators region. Residues Pro91–Ser141 are domain II. Residues Tyr142–Ser358 are domain III, AAA+ region. ATP is bound by residues Gly186, Gly188, Lys189, and Thr190. Residues His359–Thr478 form a domain IV, binds dsDNA region.

This sequence belongs to the DnaA family. As to quaternary structure, oligomerizes as a right-handed, spiral filament on DNA at oriC.

Its subcellular location is the cytoplasm. In terms of biological role, plays an essential role in the initiation and regulation of chromosomal replication. ATP-DnaA binds to the origin of replication (oriC) to initiate formation of the DNA replication initiation complex once per cell cycle. Binds the DnaA box (a 9 base pair repeat at the origin) and separates the double-stranded (ds)DNA. Forms a right-handed helical filament on oriC DNA; dsDNA binds to the exterior of the filament while single-stranded (ss)DNA is stabiized in the filament's interior. The ATP-DnaA-oriC complex binds and stabilizes one strand of the AT-rich DNA unwinding element (DUE), permitting loading of DNA polymerase. After initiation quickly degrades to an ADP-DnaA complex that is not apt for DNA replication. Binds acidic phospholipids. The polypeptide is Chromosomal replication initiator protein DnaA (Azotobacter vinelandii (strain DJ / ATCC BAA-1303)).